The sequence spans 479 residues: BRAP2 RING ZnF UBP domain-containing protein 2 (479 aa).

An RING-type; atypical zinc finger spans residues 167–207 (CPVCLERLDQDTGGILTTMCNHSFHCSCISNWPDSSCPVCR). Residues 201–294 (SSCPVCRYCQ…GKLVELNSHG (94 aa)) form a UBP-type; degenerate zinc finger. Cys-218, Cys-221, Cys-230, Cys-233, Cys-238, His-245, His-249, and His-255 together coordinate Zn(2+). Residues 328–442 (NELLQAQLEN…MAQMDGESEV (115 aa)) adopt a coiled-coil conformation. The interval 434 to 479 (AQMDGESEVSETKEVQDATVSTTNTSSSGAGNVIHANKKKSNRRKG) is disordered. Positions 451 to 466 (ATVSTTNTSSSGAGNV) are enriched in low complexity. The span at 469–479 (ANKKKSNRRKG) shows a compositional bias: basic residues.

As to quaternary structure, component of the heteromeric E3 ligase complex made of BRIZ1 and BRIZ2. Forms heterooligomers with BRIZ1 via coiled-coil domains.

The catalysed reaction is S-ubiquitinyl-[E2 ubiquitin-conjugating enzyme]-L-cysteine + [acceptor protein]-L-lysine = [E2 ubiquitin-conjugating enzyme]-L-cysteine + N(6)-ubiquitinyl-[acceptor protein]-L-lysine.. The protein operates within protein modification; protein ubiquitination. Its function is as follows. RING-type ubiquitin E3 ligase that binds ubiquitin and is required for seed germination and post-germination growth. The chain is BRAP2 RING ZnF UBP domain-containing protein 2 from Arabidopsis thaliana (Mouse-ear cress).